We begin with the raw amino-acid sequence, 397 residues long: Tryptophan synthase beta chain 1 (397 aa).

Lys-90 bears the N6-(pyridoxal phosphate)lysine mark.

It belongs to the TrpB family. Tetramer of two alpha and two beta chains. It depends on pyridoxal 5'-phosphate as a cofactor.

It catalyses the reaction (1S,2R)-1-C-(indol-3-yl)glycerol 3-phosphate + L-serine = D-glyceraldehyde 3-phosphate + L-tryptophan + H2O. The protein operates within amino-acid biosynthesis; L-tryptophan biosynthesis; L-tryptophan from chorismate: step 5/5. In terms of biological role, the beta subunit is responsible for the synthesis of L-tryptophan from indole and L-serine. This chain is Tryptophan synthase beta chain 1 (trpB1), found in Aquifex aeolicus (strain VF5).